Consider the following 160-residue polypeptide: 6,7-dimethyl-8-ribityllumazine synthase (160 aa).

5-amino-6-(D-ribitylamino)uracil is bound by residues Phe22, 57-59 (AVE), and 81-83 (AVI). 86–87 (GT) provides a ligand contact to (2S)-2-hydroxy-3-oxobutyl phosphate. Catalysis depends on His89, which acts as the Proton donor. Phe114 serves as a coordination point for 5-amino-6-(D-ribitylamino)uracil. Residue Arg128 coordinates (2S)-2-hydroxy-3-oxobutyl phosphate.

It belongs to the DMRL synthase family. In terms of assembly, forms an icosahedral capsid composed of 60 subunits, arranged as a dodecamer of pentamers.

The catalysed reaction is (2S)-2-hydroxy-3-oxobutyl phosphate + 5-amino-6-(D-ribitylamino)uracil = 6,7-dimethyl-8-(1-D-ribityl)lumazine + phosphate + 2 H2O + H(+). Its pathway is cofactor biosynthesis; riboflavin biosynthesis; riboflavin from 2-hydroxy-3-oxobutyl phosphate and 5-amino-6-(D-ribitylamino)uracil: step 1/2. In terms of biological role, catalyzes the formation of 6,7-dimethyl-8-ribityllumazine by condensation of 5-amino-6-(D-ribitylamino)uracil with 3,4-dihydroxy-2-butanone 4-phosphate. This is the penultimate step in the biosynthesis of riboflavin. The protein is 6,7-dimethyl-8-ribityllumazine synthase of Shewanella sediminis (strain HAW-EB3).